A 570-amino-acid polypeptide reads, in one-letter code: Proline--tRNA ligase (570 aa).

Belongs to the class-II aminoacyl-tRNA synthetase family. ProS type 1 subfamily. In terms of assembly, homodimer.

The protein localises to the cytoplasm. The enzyme catalyses tRNA(Pro) + L-proline + ATP = L-prolyl-tRNA(Pro) + AMP + diphosphate. Functionally, catalyzes the attachment of proline to tRNA(Pro) in a two-step reaction: proline is first activated by ATP to form Pro-AMP and then transferred to the acceptor end of tRNA(Pro). As ProRS can inadvertently accommodate and process non-cognate amino acids such as alanine and cysteine, to avoid such errors it has two additional distinct editing activities against alanine. One activity is designated as 'pretransfer' editing and involves the tRNA(Pro)-independent hydrolysis of activated Ala-AMP. The other activity is designated 'posttransfer' editing and involves deacylation of mischarged Ala-tRNA(Pro). The misacylated Cys-tRNA(Pro) is not edited by ProRS. The polypeptide is Proline--tRNA ligase (proS) (Aquifex aeolicus (strain VF5)).